Reading from the N-terminus, the 697-residue chain is Polyribonucleotide nucleotidyltransferase (697 aa).

Positions 488 and 494 each coordinate Mg(2+). The KH domain maps to 555 to 614; that stretch reads PTFEVITINPDKIRDVIGKGGATIRQITEETKAAIDIEDNGTVRVFGETKAAARAAIAKI. The S1 motif domain maps to 624–692; sequence GKIYDGKVIR…NRGRIKLSMK (69 aa).

The protein belongs to the polyribonucleotide nucleotidyltransferase family. As to quaternary structure, component of the RNA degradosome, which is a multiprotein complex involved in RNA processing and mRNA degradation. It depends on Mg(2+) as a cofactor.

It localises to the cytoplasm. The catalysed reaction is RNA(n+1) + phosphate = RNA(n) + a ribonucleoside 5'-diphosphate. Its function is as follows. Involved in mRNA degradation. Catalyzes the phosphorolysis of single-stranded polyribonucleotides processively in the 3'- to 5'-direction. This chain is Polyribonucleotide nucleotidyltransferase, found in Acinetobacter baylyi (strain ATCC 33305 / BD413 / ADP1).